The sequence spans 198 residues: Superoxide dismutase [Mn], mitochondrial (198 aa).

Histidine 26 serves as a coordination point for Mn(2+). Tyrosine 34 carries the 3'-nitrotyrosine modification. Residues lysine 44 and lysine 51 each carry the N6-acetyllysine; alternate modification. Lysine 44 and lysine 51 each carry N6-succinyllysine; alternate. Histidine 74 is a Mn(2+) binding site. N6-acetyllysine is present on lysine 90. Lysine 98 and lysine 106 each carry N6-acetyllysine; alternate. Lysine 98 and lysine 106 each carry N6-succinyllysine; alternate. Aspartate 159 and histidine 163 together coordinate Mn(2+). The residue at position 178 (lysine 178) is an N6-acetyllysine.

It belongs to the iron/manganese superoxide dismutase family. As to quaternary structure, homotetramer. Requires Mn(2+) as cofactor. Nitrated under oxidative stress. Nitration coupled with oxidation inhibits the catalytic activity. In terms of processing, acetylation at Lys-98 decreases enzymatic activity. Deacetylated by SIRT3 upon exposure to ionizing radiations or after long fasting. Post-translationally, polyubiquitinated; leading to proteasomal degradation. Deubiquitinated by USP36 which increases protein stability.

The protein resides in the mitochondrion matrix. The enzyme catalyses 2 superoxide + 2 H(+) = H2O2 + O2. In terms of biological role, destroys superoxide anion radicals which are normally produced within the cells and which are toxic to biological systems. This is Superoxide dismutase [Mn], mitochondrial (SOD2) from Hylobates lar (Lar gibbon).